Reading from the N-terminus, the 714-residue chain is Polyribonucleotide nucleotidyltransferase (714 aa).

Mg(2+) is bound by residues D484 and D490. One can recognise a KH domain in the interval P551–I610. Positions G620–K688 constitute an S1 motif domain. Residues L685–K714 form a disordered region. The segment covering K693–K714 has biased composition (basic and acidic residues).

It belongs to the polyribonucleotide nucleotidyltransferase family. Requires Mg(2+) as cofactor.

Its subcellular location is the cytoplasm. The catalysed reaction is RNA(n+1) + phosphate = RNA(n) + a ribonucleoside 5'-diphosphate. Involved in mRNA degradation. Catalyzes the phosphorolysis of single-stranded polyribonucleotides processively in the 3'- to 5'-direction. The chain is Polyribonucleotide nucleotidyltransferase from Finegoldia magna (strain ATCC 29328 / DSM 20472 / WAL 2508) (Peptostreptococcus magnus).